Consider the following 341-residue polypeptide: Ferrochelatase (341 aa).

Fe cation-binding residues include His-196 and Glu-277.

Belongs to the ferrochelatase family.

The protein resides in the cytoplasm. It carries out the reaction heme b + 2 H(+) = protoporphyrin IX + Fe(2+). It functions in the pathway porphyrin-containing compound metabolism; protoheme biosynthesis; protoheme from protoporphyrin-IX: step 1/1. Functionally, catalyzes the ferrous insertion into protoporphyrin IX. The polypeptide is Ferrochelatase (Synechococcus sp. (strain JA-3-3Ab) (Cyanobacteria bacterium Yellowstone A-Prime)).